The sequence spans 523 residues: Glucose-1-phosphate adenylyltransferase large subunit 1, chloroplastic/amyloplastic (523 aa).

A chloroplast-targeting transit peptide spans 1–49 (MSSMQFSSVLPLEGKACVSPVRREGSACERLKIGDSSSIRHERASRRMC).

It belongs to the bacterial/plant glucose-1-phosphate adenylyltransferase family. In terms of assembly, heterotetramer. Starchy endosperm and roots.

It localises to the plastid. It is found in the chloroplast. The protein localises to the amyloplast. The catalysed reaction is alpha-D-glucose 1-phosphate + ATP + H(+) = ADP-alpha-D-glucose + diphosphate. It participates in glycan biosynthesis; starch biosynthesis. Its activity is regulated as follows. Highly active without 3'phosphoglycerate, and is only slightly affected by the activator 3'phosphoglycerate and inhibitor orthophosphate. Functionally, this protein plays a role in synthesis of starch. It catalyzes the synthesis of the activated glycosyl donor, ADP-glucose from Glc-1-P and ATP. This chain is Glucose-1-phosphate adenylyltransferase large subunit 1, chloroplastic/amyloplastic, found in Hordeum vulgare (Barley).